Here is a 1372-residue protein sequence, read N- to C-terminus: DNA-directed RNA polymerase subunit beta (1372 aa).

It belongs to the RNA polymerase beta chain family. The RNAP catalytic core consists of 2 alpha, 1 beta, 1 beta' and 1 omega subunit. When a sigma factor is associated with the core the holoenzyme is formed, which can initiate transcription.

The catalysed reaction is RNA(n) + a ribonucleoside 5'-triphosphate = RNA(n+1) + diphosphate. In terms of biological role, DNA-dependent RNA polymerase catalyzes the transcription of DNA into RNA using the four ribonucleoside triphosphates as substrates. The polypeptide is DNA-directed RNA polymerase subunit beta (Bradyrhizobium sp. (strain BTAi1 / ATCC BAA-1182)).